A 732-amino-acid polypeptide reads, in one-letter code: Elongation factor 2 (732 aa).

The 242-residue stretch at 19-260 folds into the tr-type G domain; sequence ERIRNIGIAA…MVVRHLPSPI (242 aa). GTP contacts are provided by residues 28 to 35, 94 to 98, and 148 to 151; these read AHIDHGKT, DTPGH, and NKVD. The residue at position 597 (His597) is a Diphthamide.

Belongs to the TRAFAC class translation factor GTPase superfamily. Classic translation factor GTPase family. EF-G/EF-2 subfamily.

It localises to the cytoplasm. Catalyzes the GTP-dependent ribosomal translocation step during translation elongation. During this step, the ribosome changes from the pre-translocational (PRE) to the post-translocational (POST) state as the newly formed A-site-bound peptidyl-tRNA and P-site-bound deacylated tRNA move to the P and E sites, respectively. Catalyzes the coordinated movement of the two tRNA molecules, the mRNA and conformational changes in the ribosome. The sequence is that of Elongation factor 2 (fusA) from Pyrococcus horikoshii (strain ATCC 700860 / DSM 12428 / JCM 9974 / NBRC 100139 / OT-3).